A 152-amino-acid chain; its full sequence is Transcriptional regulator MraZ (152 aa).

SpoVT-AbrB domains are found at residues Ala-5 to Glu-52 and Ala-81 to Val-124.

This sequence belongs to the MraZ family. As to quaternary structure, forms oligomers.

The protein resides in the cytoplasm. Its subcellular location is the nucleoid. This Pseudoalteromonas atlantica (strain T6c / ATCC BAA-1087) protein is Transcriptional regulator MraZ.